We begin with the raw amino-acid sequence, 158 residues long: Snaclec coagulation factor X-activating enzyme light chain 2 (158 aa).

The signal sequence occupies residues 1 to 23; it reads MGRSISVSFGLLAVFLSLSGTGA. 3 disulfides stabilise this stretch: C27-C38, C55-C152, and C127-C144. Positions 34–153 constitute a C-type lectin domain; that stretch reads YRYFCYRVFK…CEEPYPFVCK (120 aa).

It belongs to the snaclec family. As to quaternary structure, heterotrimer; disulfide-linked. The heterotrimer consists of 1 heavy chain (a metalloproteinase) and 2 light chains: LC1 and LC2. As to expression, expressed by the venom gland.

The protein localises to the secreted. Functionally, regulatory subunit of the blood coagulation factor X-activating enzyme. Activates coagulation factor X (F10) by cleaving the Arg-Ile bond at position 234, activates coagulation factor IX (F9) by cleaving the Arg-Val bond at position 226 and is also able to activate protein C (PROC). May serve as an exosite by which the enzyme recognizes and binds to the Gla domain of factor X (F10) in a calcium-dependent manner. The chain is Snaclec coagulation factor X-activating enzyme light chain 2 (LC2) from Macrovipera lebetinus (Levantine viper).